Reading from the N-terminus, the 348-residue chain is Fe-S cluster assembly protein DRE2 (348 aa).

The interval 1–185 (MSGEKSSLLL…KKPESPRASV (185 aa)) is N-terminal SAM-like domain. Disordered regions lie at residues 128 to 148 (QTAP…SKSL) and 162 to 213 (KKAE…TASK). A linker region spans residues 186-241 (VAEDLDDGDELDGMNEDDSNSDELTASKSKFFDDVAGQDSADSIDEDDLVDDAEKS). Acidic residues predominate over residues 188–206 (EDLDDGDELDGMNEDDSNS). [2Fe-2S] cluster is bound by residues cysteine 248, cysteine 259, cysteine 262, and cysteine 264. Residues 248–264 (CGKTKTRRRKACKDCTC) are fe-S binding site A. 4 residues coordinate [4Fe-4S] cluster: cysteine 311, cysteine 314, cysteine 322, and cysteine 325. 2 consecutive short sequence motifs (cx2C motif) follow at residues 311 to 314 (CGSC) and 322 to 325 (CSGC). Residues 311 to 325 (CGSCSLGDAFRCSGC) are fe-S binding site B.

Belongs to the anamorsin family. In terms of assembly, monomer. Interacts with TAH18. Interacts with MIA40. [2Fe-2S] cluster serves as cofactor. It depends on [4Fe-4S] cluster as a cofactor.

Its subcellular location is the cytoplasm. It is found in the mitochondrion intermembrane space. Functionally, component of the cytosolic iron-sulfur (Fe-S) protein assembly (CIA) machinery required for the maturation of extramitochondrial Fe-S proteins. Part of an electron transfer chain functioning in an early step of cytosolic Fe-S biogenesis, facilitating the de novo assembly of a [4Fe-4S] cluster on the scaffold complex CFD1-NBP35. Electrons are transferred to DRE2 from NADPH via the FAD- and FMN-containing protein TAH18. TAH18-DRE2 are also required for the assembly of the diferric tyrosyl radical cofactor of ribonucleotide reductase (RNR), probably by providing electrons for reduction during radical cofactor maturation in the catalytic small subunit RNR2. The chain is Fe-S cluster assembly protein DRE2 from Lachancea thermotolerans (strain ATCC 56472 / CBS 6340 / NRRL Y-8284) (Yeast).